We begin with the raw amino-acid sequence, 591 residues long: Pentatricopeptide repeat-containing protein At3g47530 (591 aa).

PPR repeat units lie at residues 76–110, 112–146, 147–177, 178–208, 216–250, 251–281, 282–316, 317–351, and 354–384; these read TLSHCNTMIRAFSLSQTPCEGFRLFRSLRRNSSLP, NPLSSSFALKCCIKSGDLLGGLQIHGKIFSDGFLS, DSLLMTTLMDLYSTCENSTDACKVFDEIPKR, DTVSWNVLFSCYLRNKRTRDVLVLFDKMKND, DGVTCLLALQACANLGALDFGKQVHDFIDENGLSG, ALNLSNTLVSMYSRCGSMDKAYQVFYGMRER, NVVSWTALISGLAMNGFGKEAIEAFNEMLKFGISP, EEQTLTGLLSACSHSGLVAEGMMFFDRMRSGEFKI, and NLHHYGCVVDLLGRARLLDKAYSLIKSMEMK. The interval 389–464 is type E motif; the sequence is IWRTLLGACR…KPGCSAIELQ (76 aa). Residues 465-495 are type E(+) motif; that stretch reads GTVHEFIVDDVSHPRKEEIYKMLAEINQQLK. Residues 496-591 are type DYW motif; the sequence is IAGYVAEITS…GGSCSCNDFW (96 aa).

Belongs to the PPR family. PCMP-H subfamily.

This chain is Pentatricopeptide repeat-containing protein At3g47530 (PCMP-H76), found in Arabidopsis thaliana (Mouse-ear cress).